A 575-amino-acid chain; its full sequence is U3 small nucleolar RNA-associated protein 9 (575 aa).

Basic and acidic residues-rich tracts occupy residues Asn340–Glu355 and Val364–Ile375. The segment at Asn340–Ile375 is disordered. Residues Ser547 and Ser564 each carry the phosphoserine modification.

Interacts with snoRNA U3. Interacts with MPP10. Component of the ribosomal small subunit (SSU) processome composed of at least 40 protein subunits and snoRNA U3. In the absence of snoRNA3, forms a complex with other t-UTPs. This complex can associate with pre-18S ribosomal RNAs.

The protein resides in the nucleus. It localises to the nucleolus. Involved in nucleolar processing of pre-18S ribosomal RNA. Required for optimal pre-ribosomal RNA transcription by RNA polymerase I together with a subset of U3 proteins required for transcription (t-UTPs). This Saccharomyces cerevisiae (strain ATCC 204508 / S288c) (Baker's yeast) protein is U3 small nucleolar RNA-associated protein 9 (UTP9).